A 251-amino-acid chain; its full sequence is Derlin-1 (251 aa).

Position 2 is an N-acetylserine (Ser2). Over 2 to 15 (SDIGDWFRSIPTIT) the chain is Cytoplasmic. Residues 16–31 (RYWFAATVAVPLVGKL) traverse the membrane as a helical segment. Over 32-69 (GLISPAYFFLWPEAFLYRFQIWRPITATFYFPVGPGTG) the chain is Lumenal. The helical transmembrane segment at 70–89 (FLYLVNLYFLYQYSTRLETG) threads the bilayer. The Cytoplasmic segment spans residues 90 to 94 (AFDGR). A helical transmembrane segment spans residues 95–115 (PADYLFMLLFNWICIVITGLA). Residues 116-122 (MDMQLLM) lie on the Lumenal side of the membrane. The helical transmembrane segment at 123–137 (IPLIMSVLYVWAQLN) threads the bilayer. Residues 138–154 (RDMIVSFWFGTRFKACY) lie on the Cytoplasmic side of the membrane. Residues 155–166 (LPWVILGFNYII) traverse the membrane as a helical segment. Topologically, residues 167–170 (GGSV) are lumenal. Residues 171–189 (INELIGNLVGHLYFFLMFR) form a helical membrane-spanning segment. Topologically, residues 190–251 (YPMDLGGRNF…WGQGFRLGDQ (62 aa)) are cytoplasmic. The residue at position 201 (Ser201) is a Phosphoserine. The residue at position 202 (Thr202) is a Phosphothreonine. Ser226 carries the post-translational modification Phosphoserine. Positions 229–251 (RAADQNGGGGRHNWGQGFRLGDQ) are disordered. The SHP-box motif lies at 241-248 (NWGQGFRL).

This sequence belongs to the derlin family. In terms of assembly, homotetramer. The four subunits of the tetramer are arranged in a twofold symmetry. Forms homo- and heterooligomers with DERL2 and DERL3; binding to DERL3 is poorer than that between DERL2 and DERL3. Interacts (via SHP-box motif) with VCP. Interacts with AMFR, SELENOS, SEL1L, SELENOK and SYVN1, as well as with SEL1L-SYVN1 and VCP-SELENOS protein complexes; this interaction is weaker than that observed between DERL2 and these complexes. Interacts with NGLY1 and YOD1. Does not bind to EDEM1. Interacts with DNAJB9. Interacts with RNF103. Interacts with HM13. Interacts with XBP1 isoform 1 (via luminal/ectodomain domain); the interaction obviates the need for ectodomain shedding prior HM13/SPP-mediated XBP1 isoform 1 cleavage. Interacts with the signal recognition particle/SRP and the SRP receptor; in the process of endoplasmic reticulum stress-induced pre-emptive quality control. May interact with UBXN6. Interacts with ZFAND2B; probably through VCP. Interacts with CCDC47. Interacts with C18orf32. May interact with TRAM1. Forms a complex with SVIP and VCP/p97.

Its subcellular location is the endoplasmic reticulum membrane. Its function is as follows. Functional component of endoplasmic reticulum-associated degradation (ERAD) for misfolded lumenal proteins. Forms homotetramers which encircle a large channel traversing the endoplasmic reticulum (ER) membrane. This allows the retrotranslocation of misfolded proteins from the ER into the cytosol where they are ubiquitinated and degraded by the proteasome. The channel has a lateral gate within the membrane which provides direct access to membrane proteins with no need to reenter the ER lumen first. May mediate the interaction between VCP and the misfolded protein. Also involved in endoplasmic reticulum stress-induced pre-emptive quality control, a mechanism that selectively attenuates the translocation of newly synthesized proteins into the endoplasmic reticulum and reroutes them to the cytosol for proteasomal degradation. By controlling the steady-state expression of the IGF1R receptor, indirectly regulates the insulin-like growth factor receptor signaling pathway. This Bos taurus (Bovine) protein is Derlin-1.